We begin with the raw amino-acid sequence, 160 residues long: ATP synthase subunit b (160 aa).

A helical transmembrane segment spans residues 15–35 (LAIVIGVLFWFLRGFLGGILE).

It belongs to the ATPase B chain family. In terms of assembly, F-type ATPases have 2 components, F(1) - the catalytic core - and F(0) - the membrane proton channel. F(1) has five subunits: alpha(3), beta(3), gamma(1), delta(1), epsilon(1). F(0) has four main subunits: a(1), b(1), b'(1) and c(10-14). The alpha and beta chains form an alternating ring which encloses part of the gamma chain. F(1) is attached to F(0) by a central stalk formed by the gamma and epsilon chains, while a peripheral stalk is formed by the delta, b and b' chains.

Its subcellular location is the cellular thylakoid membrane. Its function is as follows. F(1)F(0) ATP synthase produces ATP from ADP in the presence of a proton or sodium gradient. F-type ATPases consist of two structural domains, F(1) containing the extramembraneous catalytic core and F(0) containing the membrane proton channel, linked together by a central stalk and a peripheral stalk. During catalysis, ATP synthesis in the catalytic domain of F(1) is coupled via a rotary mechanism of the central stalk subunits to proton translocation. Functionally, component of the F(0) channel, it forms part of the peripheral stalk, linking F(1) to F(0). The protein is ATP synthase subunit b of Synechococcus sp. (strain CC9902).